Here is a 148-residue protein sequence, read N- to C-terminus: Glutamyl-tRNA(Gln) amidotransferase subunit C, mitochondrial (148 aa).

The N-terminal 10 residues, 1–10, are a transit peptide targeting the mitochondrion; the sequence is MLRLLNKRFY.

Belongs to the GatC family. In terms of assembly, subunit of the heterotrimeric GatCAB amidotransferase (AdT) complex, composed of A, B and C subunits.

It localises to the mitochondrion. It carries out the reaction L-glutamyl-tRNA(Gln) + L-glutamine + ATP + H2O = L-glutaminyl-tRNA(Gln) + L-glutamate + ADP + phosphate + H(+). Its function is as follows. Allows the formation of correctly charged Gln-tRNA(Gln) through the transamidation of misacylated Glu-tRNA(Gln) in the mitochondria. The reaction takes place in the presence of glutamine and ATP through an activated gamma-phospho-Glu-tRNA(Gln). This Drosophila ananassae (Fruit fly) protein is Glutamyl-tRNA(Gln) amidotransferase subunit C, mitochondrial.